Here is a 231-residue protein sequence, read N- to C-terminus: MSRPGTYVIGLTLLVGLVVGNPGCPRSYRPLTLDYRLNPVAVIGDSYTTGTDEGGLGSKSWTARTWQMLAARGVRIAADVAAEGRAGYGVPGDHGNVFEDLTARAVQPDDALVVFFGSRNDQGMDPEDPEMLAEKVRDTFDLARHRAPSASLLVIAPPWPTADVPGPMLRIRDVLGAQARAAGAVFVDPIADHWFVDRPELIGADGVHPNDAGHEYLADKIAPLISMELVG.

An N-terminal signal peptide occupies residues methionine 1–glycine 20. The Nucleophile role is filled by serine 46. The active-site Proton donor is aspartate 205. The Proton acceptor role is filled by histidine 208.

This sequence belongs to the 'GDSL' lipolytic enzyme family.

It localises to the secreted. It is found in the cell wall. Its subcellular location is the extracellular space. The enzyme catalyses a fatty acid ester + H2O = an aliphatic alcohol + a fatty acid + H(+). It catalyses the reaction decanoate ester + H2O = decanoate + an aliphatic alcohol + H(+). The catalysed reaction is an octanoate ester + H2O = an aliphatic alcohol + octanoate + H(+). It carries out the reaction a dodecanoate ester + H2O = an aliphatic alcohol + dodecanoate + H(+). The enzyme catalyses a tetradecanoate ester + H2O = an aliphatic alcohol + tetradecanoate + H(+). Its activity is regulated as follows. Activity is inhibited by the serine modifier phenylmethylsulfonyl fluoride (PMSF). GDSL lipase that catalyzes the hydrolysis of p-nitrophenyl (pNP) esters. pNP-decanoate (C10) is the preferred substrate. It can also use pNP-octanoate (C8), pNP-dodecanoate (C12) and pNP-tetradecanoate (C14). Has lower activity with pNP-butyrate (C4), pNP-palmitate (C16) and pNP-stearate (C18). Does not show phospholipase A1 activity. Might help bacteria to utilize available lipids for its growth as well as provide resistance to various intracellular stresses by cell wall modulation resulting in enhanced intracellular survival. This Mycobacterium tuberculosis (strain ATCC 25618 / H37Rv) protein is GDSL lipase Rv0518.